The sequence spans 2313 residues: Serine/threonine-protein kinase smg-1 (2313 aa).

Positions 779 to 791 (NRKSSDKKPKSTT) are enriched in basic and acidic residues. Positions 779–798 (NRKSSDKKPKSTTEDVPPPA) are disordered. Positions 1045-1528 (ARERLQLVES…VFQVVSGAAS (484 aa)) constitute an FAT domain. The HEAT repeat unit spans residues 1478–1514 (VHVWKEILPQLFARLSHPSDHIRKTLVDLISRVCTAA). Residues 1746–2091 (VADNVTILPT…DTIELFQLRV (346 aa)) form the PI3K/PI4K catalytic domain. The interval 1752 to 1758 (ILPTKTR) is G-loop. The tract at residues 1954-1962 (GLGDRHLDN) is catalytic loop. The activation loop stretch occupies residues 1974–1998 (HIDYNICFDKGKILRIPETVPFRLS). Positions 2281–2313 (RKLSPREEADVLIAEATSSANLAQMYEGWTAWV) constitute an FATC domain.

The protein belongs to the PI3/PI4-kinase family. As to quaternary structure, component of a post-splicing multiprotein NMD complex. Requires Mn(2+) as cofactor.

Its subcellular location is the cytoplasm. It carries out the reaction L-seryl-[protein] + ATP = O-phospho-L-seryl-[protein] + ADP + H(+). It catalyses the reaction L-threonyl-[protein] + ATP = O-phospho-L-threonyl-[protein] + ADP + H(+). Functionally, serine/threonine protein kinase involved in mRNA surveillance. Recognizes the substrate consensus sequence [ST]-Q. Involved in nonsense-mediated decay (NMD) of mRNAs containing premature stop codons by phosphorylating smg-2. The sequence is that of Serine/threonine-protein kinase smg-1 (smg-1) from Caenorhabditis briggsae.